The primary structure comprises 807 residues: Phenylalanine--tRNA ligase beta subunit (807 aa).

In terms of domain architecture, tRNA-binding spans 39–153 (SARAQGVVVG…SLPPNGSPVA (115 aa)). The 85-residue stretch at 407-491 (AEAGPVLLRR…RLVGFDRFGA (85 aa)) folds into the B5 domain. The Mg(2+) site is built by aspartate 469, aspartate 475, glutamate 478, and glutamate 479. Residues 713 to 806 (PTVPFSERDL…LSKQFQAELR (94 aa)) form the FDX-ACB domain.

This sequence belongs to the phenylalanyl-tRNA synthetase beta subunit family. Type 1 subfamily. Tetramer of two alpha and two beta subunits. Requires Mg(2+) as cofactor.

The protein resides in the cytoplasm. It carries out the reaction tRNA(Phe) + L-phenylalanine + ATP = L-phenylalanyl-tRNA(Phe) + AMP + diphosphate + H(+). In Synechococcus sp. (strain CC9605), this protein is Phenylalanine--tRNA ligase beta subunit.